A 373-amino-acid polypeptide reads, in one-letter code: Chaperone protein DnaJ (373 aa).

Residues 5–70 (DYYEVLGVNR…QKRAAYDQYG (66 aa)) enclose the J domain. Residues 133-211 (GTETKIRIPV…CHGGGRVKQH (79 aa)) form a CR-type zinc finger. Zn(2+) contacts are provided by C146, C149, C163, C166, C185, C188, C199, and C202. CXXCXGXG motif repeat units follow at residues 146–153 (CETCHGSG), 163–170 (CSTCGGHG), 185–192 (CPKCHGSG), and 199–206 (CPTCHGGG). The segment at 346-373 (LEDINQQDSGKHSPREKSWMTKVKDFFQ) is disordered. The span at 354–373 (SGKHSPREKSWMTKVKDFFQ) shows a compositional bias: basic and acidic residues.

Belongs to the DnaJ family. As to quaternary structure, homodimer. Requires Zn(2+) as cofactor.

Its subcellular location is the cytoplasm. In terms of biological role, participates actively in the response to hyperosmotic and heat shock by preventing the aggregation of stress-denatured proteins and by disaggregating proteins, also in an autonomous, DnaK-independent fashion. Unfolded proteins bind initially to DnaJ; upon interaction with the DnaJ-bound protein, DnaK hydrolyzes its bound ATP, resulting in the formation of a stable complex. GrpE releases ADP from DnaK; ATP binding to DnaK triggers the release of the substrate protein, thus completing the reaction cycle. Several rounds of ATP-dependent interactions between DnaJ, DnaK and GrpE are required for fully efficient folding. Also involved, together with DnaK and GrpE, in the DNA replication of plasmids through activation of initiation proteins. The chain is Chaperone protein DnaJ from Methylobacillus flagellatus (strain ATCC 51484 / DSM 6875 / VKM B-1610 / KT).